We begin with the raw amino-acid sequence, 291 residues long: 4-hydroxy-tetrahydrodipicolinate synthase (291 aa).

Position 45 (Thr45) interacts with pyruvate. The active-site Proton donor/acceptor is the Tyr133. Catalysis depends on Lys161, which acts as the Schiff-base intermediate with substrate. Ile203 contacts pyruvate.

It belongs to the DapA family. In terms of assembly, homotetramer; dimer of dimers.

The protein localises to the cytoplasm. The enzyme catalyses L-aspartate 4-semialdehyde + pyruvate = (2S,4S)-4-hydroxy-2,3,4,5-tetrahydrodipicolinate + H2O + H(+). It participates in amino-acid biosynthesis; L-lysine biosynthesis via DAP pathway; (S)-tetrahydrodipicolinate from L-aspartate: step 3/4. In terms of biological role, catalyzes the condensation of (S)-aspartate-beta-semialdehyde [(S)-ASA] and pyruvate to 4-hydroxy-tetrahydrodipicolinate (HTPA). The polypeptide is 4-hydroxy-tetrahydrodipicolinate synthase (Neisseria meningitidis serogroup C (strain 053442)).